A 282-amino-acid chain; its full sequence is Phosphatidylserine decarboxylase proenzyme (282 aa).

Residues D85, H142, and S244 each act as charge relay system; for autoendoproteolytic cleavage activity in the active site. S244 acts as the Schiff-base intermediate with substrate; via pyruvic acid; for decarboxylase activity in catalysis. S244 carries the pyruvic acid (Ser); by autocatalysis modification.

The protein belongs to the phosphatidylserine decarboxylase family. PSD-B subfamily. Prokaryotic type I sub-subfamily. In terms of assembly, heterodimer of a large membrane-associated beta subunit and a small pyruvoyl-containing alpha subunit. Pyruvate serves as cofactor. In terms of processing, is synthesized initially as an inactive proenzyme. Formation of the active enzyme involves a self-maturation process in which the active site pyruvoyl group is generated from an internal serine residue via an autocatalytic post-translational modification. Two non-identical subunits are generated from the proenzyme in this reaction, and the pyruvate is formed at the N-terminus of the alpha chain, which is derived from the carboxyl end of the proenzyme. The autoendoproteolytic cleavage occurs by a canonical serine protease mechanism, in which the side chain hydroxyl group of the serine supplies its oxygen atom to form the C-terminus of the beta chain, while the remainder of the serine residue undergoes an oxidative deamination to produce ammonia and the pyruvoyl prosthetic group on the alpha chain. During this reaction, the Ser that is part of the protease active site of the proenzyme becomes the pyruvoyl prosthetic group, which constitutes an essential element of the active site of the mature decarboxylase.

It localises to the cell membrane. It carries out the reaction a 1,2-diacyl-sn-glycero-3-phospho-L-serine + H(+) = a 1,2-diacyl-sn-glycero-3-phosphoethanolamine + CO2. The protein operates within phospholipid metabolism; phosphatidylethanolamine biosynthesis; phosphatidylethanolamine from CDP-diacylglycerol: step 2/2. Functionally, catalyzes the formation of phosphatidylethanolamine (PtdEtn) from phosphatidylserine (PtdSer). The chain is Phosphatidylserine decarboxylase proenzyme from Coxiella burnetii (strain CbuG_Q212) (Coxiella burnetii (strain Q212)).